Consider the following 750-residue polypeptide: Photosystem I P700 chlorophyll a apoprotein A1 (750 aa).

8 consecutive transmembrane segments (helical) span residues 70–93 (VFSA…FHGA), 156–179 (LYCT…FHYH), 195–219 (LNHH…HVSL), 291–309 (IAHH…GHMY), 346–369 (WHAQ…HHMY), 385–411 (LSLF…IFMV), 433–455 (AIIS…LYIH), and 531–549 (FLVH…LILL). Residues C573 and C582 each contribute to the [4Fe-4S] cluster site. 2 helical membrane-spanning segments follow: residues 589-610 (HVFL…HFSW) and 664-686 (LSAY…MFLF). H675 lines the chlorophyll a' pocket. 2 residues coordinate chlorophyll a: M683 and Y691. W692 lines the phylloquinone pocket. A helical transmembrane segment spans residues 724 to 744 (AVGVTHYLLGGIATTWAFFLA).

It belongs to the PsaA/PsaB family. The PsaA/B heterodimer binds the P700 chlorophyll special pair and subsequent electron acceptors. PSI consists of a core antenna complex that captures photons, and an electron transfer chain that converts photonic excitation into a charge separation. The eukaryotic PSI reaction center is composed of at least 11 subunits. The cofactor is P700 is a chlorophyll a/chlorophyll a' dimer, A0 is one or more chlorophyll a, A1 is one or both phylloquinones and FX is a shared 4Fe-4S iron-sulfur center..

It localises to the plastid. Its subcellular location is the chloroplast thylakoid membrane. The enzyme catalyses reduced [plastocyanin] + hnu + oxidized [2Fe-2S]-[ferredoxin] = oxidized [plastocyanin] + reduced [2Fe-2S]-[ferredoxin]. Functionally, psaA and PsaB bind P700, the primary electron donor of photosystem I (PSI), as well as the electron acceptors A0, A1 and FX. PSI is a plastocyanin-ferredoxin oxidoreductase, converting photonic excitation into a charge separation, which transfers an electron from the donor P700 chlorophyll pair to the spectroscopically characterized acceptors A0, A1, FX, FA and FB in turn. Oxidized P700 is reduced on the lumenal side of the thylakoid membrane by plastocyanin. This Saccharum hybrid (Sugarcane) protein is Photosystem I P700 chlorophyll a apoprotein A1.